Reading from the N-terminus, the 295-residue chain is Taste receptor type 2 member 120 (295 aa).

The Extracellular segment spans residues 1–5; the sequence is MNLVE. The helical transmembrane segment at 6–26 threads the bilayer; that stretch reads WIVTIIMMTEFLLGNCANVFI. Residues 27–45 are Cytoplasmic-facing; it reads TIVNFIDCVKRRKISSADR. A helical transmembrane segment spans residues 46 to 66; that stretch reads IITAIAIFRIGLLWAMLTNWH. Residues 67–80 are Extracellular-facing; it reads SHVFTPDTDNLQMR. A helical transmembrane segment spans residues 81–101; sequence VFGGITWAITNHFTTWLGTIL. At 102–127 the chain is on the cytoplasmic side; it reads SMFYLFKIANFSNSLFLHLKRKLDNV. Residues 128 to 148 form a helical membrane-spanning segment; that stretch reads LLVIFLGSSLFLVAYLGMVNI. The Extracellular segment spans residues 149-177; the sequence is KKIAWMSIHEGNVTTKSKLKHVTSITNML. Asparagine 160 is a glycosylation site (N-linked (GlcNAc...) asparagine). A helical membrane pass occupies residues 178 to 198; the sequence is LFSLINIVPFGISLNCVLLLI. Topologically, residues 199–228 are cytoplasmic; it reads YSLSKHLKNMKFYGKGCQDQSTMVHIKALQ. Residues 229 to 249 traverse the membrane as a helical segment; that stretch reads TVVSFLLLYATYSSCVIISGW. Over 250-255 the chain is Extracellular; the sequence is SLQNAP. A helical transmembrane segment spans residues 256 to 276; that stretch reads VFLFCVTIGSFYPAGHSCILI. The Cytoplasmic segment spans residues 277-295; the sequence is WGNQKLKQVFLLLLRQMRC.

This sequence belongs to the G-protein coupled receptor T2R family.

The protein resides in the membrane. Putative taste receptor which may play a role in the perception of bitterness. This is Taste receptor type 2 member 120 from Mus musculus (Mouse).